An 81-amino-acid chain; its full sequence is ATP synthase subunit c (81 aa).

Transmembrane regions (helical) follow at residues 7–27 (AASV…PGLG) and 57–77 (LAFM…LLFA).

Belongs to the ATPase C chain family. F-type ATPases have 2 components, F(1) - the catalytic core - and F(0) - the membrane proton channel. F(1) has five subunits: alpha(3), beta(3), gamma(1), delta(1), epsilon(1). F(0) has four main subunits: a(1), b(1), b'(1) and c(10-14). The alpha and beta chains form an alternating ring which encloses part of the gamma chain. F(1) is attached to F(0) by a central stalk formed by the gamma and epsilon chains, while a peripheral stalk is formed by the delta, b and b' chains.

It is found in the cellular thylakoid membrane. In terms of biological role, f(1)F(0) ATP synthase produces ATP from ADP in the presence of a proton or sodium gradient. F-type ATPases consist of two structural domains, F(1) containing the extramembraneous catalytic core and F(0) containing the membrane proton channel, linked together by a central stalk and a peripheral stalk. During catalysis, ATP synthesis in the catalytic domain of F(1) is coupled via a rotary mechanism of the central stalk subunits to proton translocation. Functionally, key component of the F(0) channel; it plays a direct role in translocation across the membrane. A homomeric c-ring of between 10-14 subunits forms the central stalk rotor element with the F(1) delta and epsilon subunits. The polypeptide is ATP synthase subunit c (Synechococcus sp. (strain JA-3-3Ab) (Cyanobacteria bacterium Yellowstone A-Prime)).